Reading from the N-terminus, the 410-residue chain is Protein translocase subunit SecY 2 (410 aa).

10 helical membrane-spanning segments follow: residues 2 to 22 (ILIIYRALFFVTIPGVNSAAL), 45 to 65 (FSIMSLGVTAYITAQIIVQLL), 94 to 114 (LTLVLGLVQATGITLGINTLT), 125 to 145 (FTIIVIAVSMTAGSFIAMWLG), 147 to 167 (LITENGLGNGISVIITAGILV), 188 to 208 (WIRFSELMIGAAILILLIVWF), 241 to 261 (VIPVIFASTIMTIPQTILMFF), 284 to 304 (GVIIYGLMIIFFEYLYSIVQI), 339 to 359 (YLSLPGSLFLMLVSIIPLLVA), and 366 to 386 (LQIGLSGSSILIITGVLIEIG).

This sequence belongs to the SecY/SEC61-alpha family. Component of the Sec protein translocase complex. Heterotrimer consisting of SecY, SecE and SecG subunits. The heterotrimers can form oligomers, although 1 heterotrimer is thought to be able to translocate proteins. Interacts with the ribosome. Interacts with SecDF, and other proteins may be involved. Interacts with SecA.

The protein localises to the cell membrane. Functionally, the central subunit of the protein translocation channel SecYEG. Consists of two halves formed by TMs 1-5 and 6-10. These two domains form a lateral gate at the front which open onto the bilayer between TMs 2 and 7, and are clamped together by SecE at the back. The channel is closed by both a pore ring composed of hydrophobic SecY resides and a short helix (helix 2A) on the extracellular side of the membrane which forms a plug. The plug probably moves laterally to allow the channel to open. The ring and the pore may move independently. This Lactobacillus kefiranofaciens subsp. kefiranofaciens protein is Protein translocase subunit SecY 2.